We begin with the raw amino-acid sequence, 106 residues long: NADH-quinone oxidoreductase subunit K (106 aa).

A run of 3 helical transmembrane segments spans residues 9 to 29, 35 to 55, and 70 to 90; these read LGHY…GIFL, IVML…MVAF, and FILT…VIYF.

The protein belongs to the complex I subunit 4L family. As to quaternary structure, NDH-1 is composed of 14 different subunits. Subunits NuoA, H, J, K, L, M, N constitute the membrane sector of the complex.

It is found in the cell inner membrane. It carries out the reaction a quinone + NADH + 5 H(+)(in) = a quinol + NAD(+) + 4 H(+)(out). Its function is as follows. NDH-1 shuttles electrons from NADH, via FMN and iron-sulfur (Fe-S) centers, to quinones in the respiratory chain. The immediate electron acceptor for the enzyme in this species is believed to be ubiquinone. Couples the redox reaction to proton translocation (for every two electrons transferred, four hydrogen ions are translocated across the cytoplasmic membrane), and thus conserves the redox energy in a proton gradient. The sequence is that of NADH-quinone oxidoreductase subunit K from Granulibacter bethesdensis (strain ATCC BAA-1260 / CGDNIH1).